We begin with the raw amino-acid sequence, 91 residues long: Small ribosomal subunit protein bS16 (91 aa).

The protein belongs to the bacterial ribosomal protein bS16 family.

This chain is Small ribosomal subunit protein bS16, found in Limosilactobacillus reuteri (strain DSM 20016) (Lactobacillus reuteri).